Reading from the N-terminus, the 239-residue chain is Adapter protein MecA (239 aa).

Residues 118 to 128 (EQRTKEKEAQG) show a composition bias toward basic and acidic residues. The tract at residues 118-137 (EQRTKEKEAQGSKRQKSSAR) is disordered.

The protein belongs to the MecA family. In terms of assembly, homodimer.

Functionally, enables the recognition and targeting of unfolded and aggregated proteins to the ClpC protease or to other proteins involved in proteolysis. The sequence is that of Adapter protein MecA from Staphylococcus aureus (strain JH1).